Consider the following 248-residue polypeptide: 3-oxoacyl-[acyl-carrier-protein] reductase FabG (248 aa).

NADP(+) contacts are provided by residues 14–17 (GGSR), 64–65 (DV), and N91. Substrate is bound at residue S143. Y156 acts as the Proton acceptor in catalysis. NADP(+) contacts are provided by residues 156-160 (YAAAK) and I189.

The protein belongs to the short-chain dehydrogenases/reductases (SDR) family. Homotetramer.

It carries out the reaction a (3R)-hydroxyacyl-[ACP] + NADP(+) = a 3-oxoacyl-[ACP] + NADPH + H(+). It functions in the pathway lipid metabolism; fatty acid biosynthesis. Its function is as follows. Catalyzes the NADPH-dependent reduction of beta-ketoacyl-ACP substrates to beta-hydroxyacyl-ACP products, the first reductive step in the elongation cycle of fatty acid biosynthesis. This is 3-oxoacyl-[acyl-carrier-protein] reductase FabG (fabG) from Chlamydia pneumoniae (Chlamydophila pneumoniae).